Consider the following 163-residue polypeptide: SKP1-like protein 3 (163 aa).

The segment at 105–163 (LRAANYLNISGLLDLTCKAVADQMRGKTPAQMREHFNIKNDYTPEEEAEVRNENRWAFE) is interaction with the F-box domain of F-box proteins.

It belongs to the SKP1 family. In terms of assembly, part of a SCF (SKP1-cullin-F-box) protein ligase complex. Interacts with ADO3/FKF1 and At3g61590. In terms of tissue distribution, highly expressed in siliques.

Its subcellular location is the nucleus. Its pathway is protein modification; protein ubiquitination. Functionally, involved in ubiquitination and subsequent proteasomal degradation of target proteins. Together with CUL1, RBX1 and a F-box protein, it forms a SCF E3 ubiquitin ligase complex. The functional specificity of this complex depends on the type of F-box protein. In the SCF complex, it serves as an adapter that links the F-box protein to CUL1. The polypeptide is SKP1-like protein 3 (ASK3) (Arabidopsis thaliana (Mouse-ear cress)).